The sequence spans 682 residues: Heat shock 70 kDa protein 9, mitochondrial (682 aa).

Residues 1 to 46 (MASVALLRSFRRREVQMASVSAFKSVSANGKNSMFGKLGYLARPFC) constitute a mitochondrion transit peptide. The disordered stretch occupies residues 640–682 (SKIGEHMSKGSGSSGSDGSSGEGTSGTEQTPEAEFEEASGSRK). Positions 651-663 (GSSGSDGSSGEGT) are enriched in gly residues.

The protein belongs to the heat shock protein 70 (TC 1.A.33) family. DnaK subfamily. As to quaternary structure, interacts with HSCB.

The protein resides in the mitochondrion. Its subcellular location is the cytoplasm. The protein localises to the cytosol. Its function is as follows. Chaperone involved in the maturation of iron-sulfur [Fe-S] cluster-containing proteins. Has a low intrinsic ATPase activity which is markedly stimulated by HSCB and ISU1. In cooperation with other chaperones, Hsp70s are key components that facilitate folding of de novo synthesized proteins, assist translocation of precursor proteins into organelles, and are responsible for degradation of damaged protein under stress conditions. The polypeptide is Heat shock 70 kDa protein 9, mitochondrial (Arabidopsis thaliana (Mouse-ear cress)).